We begin with the raw amino-acid sequence, 171 residues long: MDRAQKEKVVEELGQIFESSGVVVVAHYAGITVAQMQDLRAQMREVGGSVRVAKNRLAKIALAGKPSEKMGDLLTGMTVMAYSEDPVAAAKVADAYAKKNDKFVILGGAMGDTILDPAGVKTVAAMPSREELIAQIVSCIGAPASNIAGAIGAPASNIAGILSTLEEREAA.

The protein belongs to the universal ribosomal protein uL10 family. As to quaternary structure, part of the ribosomal stalk of the 50S ribosomal subunit. The N-terminus interacts with L11 and the large rRNA to form the base of the stalk. The C-terminus forms an elongated spine to which L12 dimers bind in a sequential fashion forming a multimeric L10(L12)X complex.

Its function is as follows. Forms part of the ribosomal stalk, playing a central role in the interaction of the ribosome with GTP-bound translation factors. This is Large ribosomal subunit protein uL10 from Cereibacter sphaeroides (strain ATCC 17023 / DSM 158 / JCM 6121 / CCUG 31486 / LMG 2827 / NBRC 12203 / NCIMB 8253 / ATH 2.4.1.) (Rhodobacter sphaeroides).